The sequence spans 596 residues: Arginine--tRNA ligase (596 aa).

The 'HIGH' region signature appears at 139 to 149 (ANPTGPLHVGH).

This sequence belongs to the class-I aminoacyl-tRNA synthetase family. As to quaternary structure, monomer.

The protein localises to the cytoplasm. The catalysed reaction is tRNA(Arg) + L-arginine + ATP = L-arginyl-tRNA(Arg) + AMP + diphosphate. The protein is Arginine--tRNA ligase of Paraburkholderia phytofirmans (strain DSM 17436 / LMG 22146 / PsJN) (Burkholderia phytofirmans).